Reading from the N-terminus, the 445-residue chain is Zinc finger protein SHOOT GRAVITROPISM 5 (445 aa).

The segment covering Ser22–Ser31 has biased composition (low complexity). A disordered region spans residues Ser22 to Val59. Residues Glu32–Thr42 are compositionally biased toward polar residues. C2H2-type zinc fingers lie at residues Tyr73 to His95, Tyr115 to His145, and Trp151 to His178. 8 residues coordinate Zn(2+): Cys153, Cys156, His169, Cys173, Cys180, Cys182, His195, and Cys199. The segment at His178–Ala201 adopts a CCHC-type 2; atypical zinc-finger fold. Positions Arg188–Ser200 are SHR-binding. 2 disordered regions span residues Arg203–Arg253 and Ser281–Ser314. Positions Thr214–Gln248 are enriched in polar residues. The span at Ser281–Gln293 shows a compositional bias: low complexity. Residues Met340–Ser397 adopt a coiled-coil conformation.

As to expression, mainly expressed in the endodermis, the gravity-sensing tissue in inflorescence stems. Mostly present in stems and flowers, and, to a lower extent, in seedlings, hypocotyls, roots and the shoot apical meristem (SAM).

It localises to the nucleus. Transcription factor involved in inflorescence stems gravitropism, probably by regulating starch accumulation in amyloplasts of graviperceptive cells. Required for stem circumnutation movements. Regulates lateral organ morphogenesis and gravitropic responses. Acts cooperatively with IDD16 to control silique and branche orientation. Involved in the establishment of auxin gradients through the regulation of auxin biosynthesis and transport. This Arabidopsis thaliana (Mouse-ear cress) protein is Zinc finger protein SHOOT GRAVITROPISM 5.